The following is a 193-amino-acid chain: ATP-dependent Clp protease proteolytic subunit (193 aa).

Serine 98 acts as the Nucleophile in catalysis. Histidine 123 is an active-site residue.

This sequence belongs to the peptidase S14 family. In terms of assembly, fourteen ClpP subunits assemble into 2 heptameric rings which stack back to back to give a disk-like structure with a central cavity, resembling the structure of eukaryotic proteasomes.

It is found in the cytoplasm. The catalysed reaction is Hydrolysis of proteins to small peptides in the presence of ATP and magnesium. alpha-casein is the usual test substrate. In the absence of ATP, only oligopeptides shorter than five residues are hydrolyzed (such as succinyl-Leu-Tyr-|-NHMec, and Leu-Tyr-Leu-|-Tyr-Trp, in which cleavage of the -Tyr-|-Leu- and -Tyr-|-Trp bonds also occurs).. Functionally, cleaves peptides in various proteins in a process that requires ATP hydrolysis. Has a chymotrypsin-like activity. Plays a major role in the degradation of misfolded proteins. The protein is ATP-dependent Clp protease proteolytic subunit of Pasteurella multocida (strain Pm70).